The chain runs to 89 residues: Small ribosomal subunit protein uS15 (89 aa).

The protein belongs to the universal ribosomal protein uS15 family. In terms of assembly, part of the 30S ribosomal subunit. Forms a bridge to the 50S subunit in the 70S ribosome, contacting the 23S rRNA.

Its function is as follows. One of the primary rRNA binding proteins, it binds directly to 16S rRNA where it helps nucleate assembly of the platform of the 30S subunit by binding and bridging several RNA helices of the 16S rRNA. Functionally, forms an intersubunit bridge (bridge B4) with the 23S rRNA of the 50S subunit in the ribosome. The protein is Small ribosomal subunit protein uS15 of Marinomonas sp. (strain MWYL1).